A 276-amino-acid chain; its full sequence is Large ribosomal subunit protein uL2 (276 aa).

The interval 224–276 (VMNPVDHPHGGGEGKAPIGRKSPMTPWGKPTLGFKTRKKKNKSDKFIIRRRKK) is disordered. Over residues 258 to 276 (KTRKKKNKSDKFIIRRRKK) the composition is skewed to basic residues.

This sequence belongs to the universal ribosomal protein uL2 family. Part of the 50S ribosomal subunit. Forms a bridge to the 30S subunit in the 70S ribosome.

Functionally, one of the primary rRNA binding proteins. Required for association of the 30S and 50S subunits to form the 70S ribosome, for tRNA binding and peptide bond formation. It has been suggested to have peptidyltransferase activity; this is somewhat controversial. Makes several contacts with the 16S rRNA in the 70S ribosome. This is Large ribosomal subunit protein uL2 from Geobacillus sp. (strain WCH70).